The chain runs to 378 residues: MGQSKKLNKQPRSLSPLVLLSGISKSFDGKEVISQLDLTINNGEFLTLLGPSGCGKTTVLRLIAGLETVDAGHIMLDNQDITHVPAENRYVNTVFQSYALFPHMTVFENVAFGLRMQKTPAAEIAPRVTDALRMVQLEEFAQRKPHQLSGGQQQRVAIARAVVNKPRLLLLDESLSALDYKLRKQMQNELKALQRKLGITFVFVTHDQEEALTMSDRIVVMRNGVIEQDGTPREIYEEPKNLFVAGFIGEINRFDATVIERLDEQRVRASVEGRECNIYVNFAVELGQKLNVLLRPEDLRVEEINDDNHIEGLIGYVRERNYKGMTLESVVELENGKMVMVSEFFNEDDPDFDHSLDQKMAISWVESWEVVLADEEHK.

An ABC transporter domain is found at valine 18–isoleucine 248. Glycine 50 to threonine 57 contacts ATP.

Belongs to the ABC transporter superfamily. Spermidine/putrescine importer (TC 3.A.1.11.1) family. In terms of assembly, the complex is composed of two ATP-binding proteins (PotA), two transmembrane proteins (PotB and PotC) and a solute-binding protein (PotD).

The protein resides in the cell inner membrane. The catalysed reaction is ATP + H2O + polyamine-[polyamine-binding protein]Side 1 = ADP + phosphate + polyamineSide 2 + [polyamine-binding protein]Side 1.. Its function is as follows. Part of the ABC transporter complex PotABCD involved in spermidine/putrescine import. Responsible for energy coupling to the transport system. The chain is Spermidine/putrescine import ATP-binding protein PotA from Salmonella typhi.